The primary structure comprises 292 residues: Protease HtpX (292 aa).

The next 2 membrane-spanning stretches (helical) occupy residues 4–24 and 34–54; these read IALF…VLSL and GLMI…LLMS. Position 139 (His-139) interacts with Zn(2+). Glu-140 is a catalytic residue. His-143 is a Zn(2+) binding site. 2 helical membrane-spanning segments follow: residues 158-178 and 192-212; these read IVNT…AGFL and MIYF…ASII. A Zn(2+)-binding site is contributed by Glu-221.

It belongs to the peptidase M48B family. Zn(2+) serves as cofactor.

The protein localises to the cell inner membrane. This Serratia proteamaculans (strain 568) protein is Protease HtpX.